Here is a 527-residue protein sequence, read N- to C-terminus: Cytochrome b5 reductase 4 (527 aa).

The disordered stretch occupies residues 1–24; sequence MLNVPSQAFPAAGSQQRVAPAGQS. The 77-residue stretch at 56–132 folds into the Cytochrome b5 heme-binding domain; the sequence is LIEVTEDELK…LKECLVGRMA (77 aa). Heme contacts are provided by His91 and His114. Residues 138-171 are disordered; it reads ALQAHTEKTESTHLNGLSAPPSLRPEPLSAPLPA. The region spanning 173-264 is the CS domain; that stretch reads DHRPRYDWFQ…SVKEKWTQLG (92 aa). The region spanning 281–392 is the FAD-binding FR-type domain; sequence LFYRECVLLS…GGPEGSFTLR (112 aa). Residues 372 to 387 and 399 to 431 each bind FAD; these read ANLP…GPEG and HLYM…KMKL.

It belongs to the flavoprotein pyridine nucleotide cytochrome reductase family. It depends on FAD as a cofactor.

The protein resides in the endoplasmic reticulum. The enzyme catalyses 2 Fe(III)-[cytochrome b5] + NADH = 2 Fe(II)-[cytochrome b5] + NAD(+) + H(+). In terms of biological role, NADH-cytochrome b5 reductase involved in endoplasmic reticulum stress response pathway. This is Cytochrome b5 reductase 4 (cyb5r4) from Danio rerio (Zebrafish).